Reading from the N-terminus, the 389-residue chain is Putative glutamate--cysteine ligase 2 (389 aa).

The protein belongs to the glutamate--cysteine ligase type 2 family. YbdK subfamily.

The catalysed reaction is L-cysteine + L-glutamate + ATP = gamma-L-glutamyl-L-cysteine + ADP + phosphate + H(+). ATP-dependent carboxylate-amine ligase which exhibits weak glutamate--cysteine ligase activity. The sequence is that of Putative glutamate--cysteine ligase 2 from Rhodospirillum rubrum (strain ATCC 11170 / ATH 1.1.1 / DSM 467 / LMG 4362 / NCIMB 8255 / S1).